The following is a 514-amino-acid chain: Glycosyltransferase-like At3g57200 (514 aa).

Residues 1-23 (MAGLYSSSSSSKPTLSSSPSSSS) are disordered. An N-terminal signal peptide occupies residues 1-39 (MAGLYSSSSSSKPTLSSSPSSSSSSRLFLLVTLLPLSLA). N-linked (GlcNAc...) asparagine glycosylation is found at Asn-156, Asn-187, Asn-251, and Asn-460. Residues 457-514 (PSKNSSTADSTSGITRESSQETGKRRVLEFHLDVDGESQASAVPPQSPPGLEATQMEL) are disordered. Residues 458–473 (SKNSSTADSTSGITRE) show a composition bias toward polar residues. Over residues 474–490 (SSQETGKRRVLEFHLDV) the composition is skewed to basic and acidic residues.

This sequence belongs to the glycosyltransferase 25 family.

Its subcellular location is the secreted. It localises to the cell wall. The protein localises to the cytoplasm. It is found in the cell membrane. In terms of biological role, involved in the coordination between cell elongation and cellulose synthesis by promoting the expression of genes involved in cell elongation and cellulose synthesis. Acts as a regulator of plasmodesmatal permeability. Maybe a glycosyltransferase. This chain is Glycosyltransferase-like At3g57200, found in Arabidopsis thaliana (Mouse-ear cress).